An 862-amino-acid polypeptide reads, in one-letter code: Valine--tRNA ligase (862 aa).

A 'HIGH' region motif is present at residues 47 to 57; the sequence is PTASGSLHIGH. Positions 110–130 are disordered; sequence EPGLTPPFEGGDNKSSKAADQ. Residues 120–129 show a composition bias toward basic and acidic residues; it reads GDNKSSKAAD. The short motif at 584–588 is the 'KMSKS' region element; that stretch reads KMSKS. An ATP-binding site is contributed by Lys-587.

It belongs to the class-I aminoacyl-tRNA synthetase family. ValS type 2 subfamily. In terms of assembly, monomer.

It localises to the cytoplasm. It catalyses the reaction tRNA(Val) + L-valine + ATP = L-valyl-tRNA(Val) + AMP + diphosphate. Functionally, catalyzes the attachment of valine to tRNA(Val). As ValRS can inadvertently accommodate and process structurally similar amino acids such as threonine, to avoid such errors, it has a 'posttransfer' editing activity that hydrolyzes mischarged Thr-tRNA(Val) in a tRNA-dependent manner. The chain is Valine--tRNA ligase from Leifsonia xyli subsp. xyli (strain CTCB07).